We begin with the raw amino-acid sequence, 383 residues long: Ribosomal RNA large subunit methyltransferase G (383 aa).

This sequence belongs to the methyltransferase superfamily. RlmG family.

The protein localises to the cytoplasm. It carries out the reaction guanosine(1835) in 23S rRNA + S-adenosyl-L-methionine = N(2)-methylguanosine(1835) in 23S rRNA + S-adenosyl-L-homocysteine + H(+). Its function is as follows. Specifically methylates the guanine in position 1835 (m2G1835) of 23S rRNA. The polypeptide is Ribosomal RNA large subunit methyltransferase G (Shewanella denitrificans (strain OS217 / ATCC BAA-1090 / DSM 15013)).